A 328-amino-acid polypeptide reads, in one-letter code: Phospholipid scramblase 1 (328 aa).

The interval 1-93 is proline-rich domain (PRD); sequence MENHSKQTEA…NHPGGPGGTP (93 aa). The segment at 1-96 is disordered; the sequence is MENHSKQTEA…GGPGGTPWMP (96 aa). The Cytoplasmic portion of the chain corresponds to 1-297; it reads MENHSKQTEA…IQFPLDLDVK (297 aa). The SH3-binding 1 motif lies at 18–26; that stretch reads PAGYPPPYP. Positions 22–25 match the PPxY motif motif; that stretch reads PPPY. The span at 28–47 shows a compositional bias: low complexity; the sequence is AAFQGPSDHAAYPIPQAGYQ. The span at 49-64 shows a compositional bias: pro residues; the sequence is PPGPYPGPQPGYPVPP. The SH3-binding 2 signature appears at 56–64; that stretch reads PQPGYPVPP. Tyrosine 83 carries the post-translational modification Phosphotyrosine; by ABL. The SH3-binding 3 signature appears at 93–101; the sequence is PWMPAPPPP. Threonine 170 is modified (phosphothreonine; by PKC/PRKCD). 4 S-palmitoyl cysteine lipidation sites follow: cysteine 193, cysteine 194, cysteine 197, and cysteine 198. Positions 269 to 275 match the Nuclear localization signal motif; sequence SKQWSGF. A helical transmembrane segment spans residues 298–314; sequence MKAVMLGACFLIDFMFF. Residues 315 to 328 are Extracellular-facing; sequence ERTGNEEQRSGAWQ.

The protein belongs to the phospholipid scramblase family. Forms homooligomers in the presence of calcium. Interacts with ABL. Interacts with RELT, RELL1 and RELL2. Interacts with OXSR1 in the presence of RELT. Interacts with OCLN, TOP2A and TOP2B. Interacts with TRPC1, TRPC4 and TRPC5. Interacts with ILDR1. Ca(2+) serves as cofactor. It depends on Mg(2+) as a cofactor. Requires Zn(2+) as cofactor. In terms of processing, phosphorylation at Thr-170 by PKC/PKCD increases its phospholipid scramblase activity during both cell stimulation and apoptosis. Phosphorylated by OXSR1 in the presence of RELT. Palmitoylation is required for its phospholipid scramblase activity. Palmitoylation regulates its localization to the cell membrane or the nucleus; trafficking to the cell membrane is dependent upon palmitoylation whereas in the absence of palmitoylation, localizes to the nucleus. Highly expressed in kidney, lung, liver and bone marrow, slightly in spleen, heart and macrophage.

It is found in the cell membrane. The protein resides in the nucleus. The protein localises to the cytoplasm. Its subcellular location is the perinuclear region. It catalyses the reaction a 1,2-diacyl-sn-glycero-3-phosphocholine(in) = a 1,2-diacyl-sn-glycero-3-phosphocholine(out). The enzyme catalyses a 1,2-diacyl-sn-glycero-3-phosphoethanolamine(in) = a 1,2-diacyl-sn-glycero-3-phosphoethanolamine(out). It carries out the reaction a 1,2-diacyl-sn-glycero-3-phospho-L-serine(in) = a 1,2-diacyl-sn-glycero-3-phospho-L-serine(out). Its function is as follows. Catalyzes calcium-induced ATP-independent rapid bidirectional and non-specific distribution of phospholipids (lipid scrambling or lipid flip-flop) between the inner and outer leaflet of the plasma membrane resulting in collapse of the phospholipid asymmetry which leads to phosphatidylserine externalization on the cell surface. Mediates calcium-dependent phosphatidylserine externalization and apoptosis in neurons via its association with TRPC5. Also exhibits magnesium-dependent nuclease activity against double-stranded DNA and RNA but not single-stranded DNA and can enhance DNA decatenation mediated by TOP2A. Negatively regulates FcR-mediated phagocytosis in differentiated macrophages. May contribute to cytokine-regulated cell proliferation and differentiation. In Mus musculus (Mouse), this protein is Phospholipid scramblase 1 (Plscr1).